A 231-amino-acid chain; its full sequence is Probable glutathione S-transferase GSTU1 (231 aa).

The 80-residue stretch at Lys5 to Pro84 folds into the GST N-terminal domain. Residues Ser15, Lys42, Ile56, and Glu68–Ser69 contribute to the glutathione site. Residues Ala97–Phe220 form the GST C-terminal domain.

It belongs to the GST superfamily. Tau family.

It catalyses the reaction RX + glutathione = an S-substituted glutathione + a halide anion + H(+). Conjugation of reduced glutathione to a wide number of exogenous and endogenous hydrophobic electrophiles. The protein is Probable glutathione S-transferase GSTU1 (GSTU1) of Oryza sativa subsp. japonica (Rice).